The primary structure comprises 144 residues: MQFRASIAAAAGLFALANARIYGIAFPETVKAGDEVEAVITTENYIQAVQDIAIAFGIATEASAYPETLGNALGSFYLGPEESNTLENITETVTIPAGLAPGQYVVAAGLYSLYGASSSPTLSHYNVTVTVGNVTSETYVGSQR.

A signal peptide spans 1–19 (MQFRASIAAAAGLFALANA). Residues Asn-88, Asn-126, and Asn-133 are each glycosylated (N-linked (GlcNAc...) asparagine). Residues 103 to 132 (QYVVAAGLYSLYGASSSPTLSHYNVTVTVG) form a BAK1/SERK3-binding region.

It belongs to the NIS1 effector family.

It is found in the secreted. The protein resides in the host cytoplasm. Functionally, secreted effector that induces necrotic lesions in Nicotiana benthamiana. Interacts with the host receptor-like kinases (RLKs) BAK1/SERK3 and BKK1/SERK4, inhibits their kinase activity and suppresses INF1-induced pathogen-associated molecular pattern (PAMP)-triggered immunity (PTI) in N.benthamiana. Also interacts with the host receptor-like cytoplasmic kinase (RLCK) BIK1 and inhibits its kinase activity, thereby inhibiting PAMP-induced ROS generation. In PTI, phosphorylation relaying by RLKs and RLCKs is critical for the initiation of downstream signaling. The sequence is that of Necrosis-inducing secreted protein 1 from Colletotrichum higginsianum (strain IMI 349063) (Crucifer anthracnose fungus).